We begin with the raw amino-acid sequence, 278 residues long: Digeranylgeranylglyceryl phosphate synthase (278 aa).

The next 8 helical transmembrane spans lie at 12–32 (LKNCLTASFGAFIGGLIASYF), 34–54 (LATVYDLILASIVVFLVCGFG), 91–111 (LLVFVGLFISLFNMACFLMAV), 129–149 (IIGNLIVAYLTGSVFIFGGIA), 153–173 (IDVTIMLFLCALFAMWSREII), 204–224 (FLLVFAVFLSPLPYLFGFFGI), 225–245 (YYMLSVVFCDLLFLIGIYNLV), and 257–277 (SRNIKIVTNLVLIAFLIGSLF).

Belongs to the UbiA prenyltransferase family. DGGGP synthase subfamily. It depends on Mg(2+) as a cofactor.

The protein localises to the cell membrane. The catalysed reaction is sn-3-O-(geranylgeranyl)glycerol 1-phosphate + (2E,6E,10E)-geranylgeranyl diphosphate = 2,3-bis-O-(geranylgeranyl)-sn-glycerol 1-phosphate + diphosphate. It participates in membrane lipid metabolism; glycerophospholipid metabolism. Its function is as follows. Prenyltransferase that catalyzes the transfer of the geranylgeranyl moiety of geranylgeranyl diphosphate (GGPP) to the C2 hydroxyl of (S)-3-O-geranylgeranylglyceryl phosphate (GGGP). This reaction is the second ether-bond-formation step in the biosynthesis of archaeal membrane lipids. In Methanococcus maripaludis (strain C7 / ATCC BAA-1331), this protein is Digeranylgeranylglyceryl phosphate synthase.